Reading from the N-terminus, the 125-residue chain is Protein MGF 110-4L (125 aa).

Residues 1-29 form the signal peptide; that stretch reads MLVVFFLGILGLLANQILGLPTQAGGHLR. N65 carries N-linked (GlcNAc...) asparagine; by host glycosylation. A Prevents secretion from ER motif is present at residues 122-125; that stretch reads KEDL.

It belongs to the asfivirus MGF 110 family.

The protein localises to the virion. It localises to the host endoplasmic reticulum-Golgi intermediate compartment. Causes the redistribution of lumenal ER protein to an enlarged ERGIC compartment. The chain is Protein MGF 110-4L from Ornithodoros (relapsing fever ticks).